A 106-amino-acid polypeptide reads, in one-letter code: Large ribosomal subunit protein uL24 (106 aa).

The protein belongs to the universal ribosomal protein uL24 family. In terms of assembly, part of the 50S ribosomal subunit.

Its function is as follows. One of two assembly initiator proteins, it binds directly to the 5'-end of the 23S rRNA, where it nucleates assembly of the 50S subunit. Functionally, one of the proteins that surrounds the polypeptide exit tunnel on the outside of the subunit. The sequence is that of Large ribosomal subunit protein uL24 from Clostridium acetobutylicum (strain ATCC 824 / DSM 792 / JCM 1419 / IAM 19013 / LMG 5710 / NBRC 13948 / NRRL B-527 / VKM B-1787 / 2291 / W).